The primary structure comprises 463 residues: Glutamate--tRNA ligase 2 (463 aa).

The short motif at 11 to 21 is the 'HIGH' region element; the sequence is PSPTGYLHIGG. The 'KMSKS' region motif lies at 240-244; it reads KLSKR. An ATP-binding site is contributed by Lys-243.

Belongs to the class-I aminoacyl-tRNA synthetase family. Glutamate--tRNA ligase type 1 subfamily. In terms of assembly, monomer.

It is found in the cytoplasm. It carries out the reaction tRNA(Glu) + L-glutamate + ATP = L-glutamyl-tRNA(Glu) + AMP + diphosphate. Its function is as follows. Catalyzes the attachment of glutamate to tRNA(Glu) in a two-step reaction: glutamate is first activated by ATP to form Glu-AMP and then transferred to the acceptor end of tRNA(Glu). The sequence is that of Glutamate--tRNA ligase 2 from Campylobacter jejuni (strain RM1221).